Consider the following 234-residue polypeptide: Lipoprotein-releasing system ATP-binding protein LolD (234 aa).

Residues 7–234 (LLCNNLCKKY…QDELTVTGAL (228 aa)) enclose the ABC transporter domain. 43–50 (GSSGSGKS) is a binding site for ATP.

Belongs to the ABC transporter superfamily. Lipoprotein translocase (TC 3.A.1.125) family. As to quaternary structure, the complex is composed of two ATP-binding proteins (LolD) and two transmembrane proteins (LolC and LolE).

The protein resides in the cell inner membrane. Its function is as follows. Part of the ABC transporter complex LolCDE involved in the translocation of mature outer membrane-directed lipoproteins, from the inner membrane to the periplasmic chaperone, LolA. Responsible for the formation of the LolA-lipoprotein complex in an ATP-dependent manner. This Photorhabdus laumondii subsp. laumondii (strain DSM 15139 / CIP 105565 / TT01) (Photorhabdus luminescens subsp. laumondii) protein is Lipoprotein-releasing system ATP-binding protein LolD.